Consider the following 451-residue polypeptide: Trigger factor (451 aa).

Positions 165–250 (DDKLTIDFEG…LHQIQVREAL (86 aa)) constitute a PPIase FKBP-type domain.

This sequence belongs to the FKBP-type PPIase family. Tig subfamily.

Its subcellular location is the cytoplasm. The catalysed reaction is [protein]-peptidylproline (omega=180) = [protein]-peptidylproline (omega=0). Its function is as follows. Involved in protein export. Acts as a chaperone by maintaining the newly synthesized protein in an open conformation. Functions as a peptidyl-prolyl cis-trans isomerase. This Helicobacter pylori (strain P12) protein is Trigger factor.